The chain runs to 618 residues: Probable N-acetylgalactosaminyltransferase 6 (618 aa).

At 1 to 16 (MIASLIRSRRRSRRCV) the chain is on the cytoplasmic side. Residues 17 to 39 (VYSVFLFGFLALWGSFALALVFL) form a helical; Signal-anchor for type II membrane protein membrane-spanning segment. Residues 40-618 (SDMYIGEDQI…TEMSWLPEHP (579 aa)) are Lumenal-facing. N-linked (GlcNAc...) asparagine glycosylation is found at asparagine 81 and asparagine 149. Cystine bridges form between cysteine 147-cysteine 381 and cysteine 372-cysteine 452. Positions 156-267 (LPTTSVIIVY…KGWLEPLLTR (112 aa)) are catalytic subdomain A. Substrate is bound by residues aspartate 197 and arginine 228. Aspartate 251 is a binding site for Mn(2+). Serine 252 contacts substrate. Histidine 253 is a binding site for Mn(2+). The interval 327-389 (PIESPTMAGG…PCSHVGHVFR (63 aa)) is catalytic subdomain B. A substrate-binding site is contributed by tryptophan 358. Position 386 (histidine 386) interacts with Mn(2+). A substrate-binding site is contributed by arginine 389. Residues 474-609 (RFGRMTSSSN…SNDRQNWTIT (136 aa)) enclose the Ricin B-type lectin domain. N-linked (GlcNAc...) asparagine glycosylation occurs at asparagine 483. 3 cysteine pairs are disulfide-bonded: cysteine 487-cysteine 505, cysteine 530-cysteine 550, and cysteine 575-cysteine 597. The N-linked (GlcNAc...) asparagine glycan is linked to asparagine 605.

The protein belongs to the glycosyltransferase 2 family. GalNAc-T subfamily. Mn(2+) is required as a cofactor.

The protein resides in the golgi apparatus membrane. It functions in the pathway protein modification; protein glycosylation. Its function is as follows. Probable glycopeptide transferase involved in O-linked oligosaccharide biosynthesis. Glycopeptide transferases catalyze the transfer of an N-acetyl-D-galactosamine residue to an already glycosylated peptide. In contrast to other members of the family, it does not act as a peptide transferase that transfers GalNAc onto serine or threonine residue on peptides that have been tested. Some peptide transferase activity is however not excluded, considering that its appropriate peptide substrate may remain unidentified. The polypeptide is Probable N-acetylgalactosaminyltransferase 6 (gly-6) (Caenorhabditis elegans).